A 78-amino-acid polypeptide reads, in one-letter code: Large ribosomal subunit protein bL28 (78 aa).

It belongs to the bacterial ribosomal protein bL28 family.

In Tropheryma whipplei (strain TW08/27) (Whipple's bacillus), this protein is Large ribosomal subunit protein bL28.